A 664-amino-acid polypeptide reads, in one-letter code: uncharacterized protein (664 aa).

The first 35 residues, 1-35 (MGVSVLTFHVSLFLKRILSIAFFLLSLSTLLRIVN), serve as a signal peptide directing secretion. 2 N-linked (GlcNAc...) asparagine glycosylation sites follow: N101 and N138. 2 Sel1-like repeats span residues 141–178 (AFAN…KQGS) and 179–214 (LDAH…DHLF). Residues N221, N300, and N371 are each glycosylated (N-linked (GlcNAc...) asparagine). 4 Sel1-like repeats span residues 337–372 (AQSC…TKND), 373–409 (SNSY…MNEN), 410–441 (PHAL…TQKS), and 442–477 (VISY…EAIR). N454 and N537 each carry an N-linked (GlcNAc...) asparagine glycan. Sel1-like repeat units follow at residues 564-599 (IDAI…EQSS) and 601-636 (GMGL…SNQN).

The protein belongs to the sel-1 family.

This is an uncharacterized protein from Schizosaccharomyces pombe (strain 972 / ATCC 24843) (Fission yeast).